The sequence spans 175 residues: Bifunctional protein PyrR (175 aa).

Substrate is bound by residues 40–41 (TR), 102–110 (DDVLYTGRT), Arg-135, and Val-159. The PRPP-binding signature appears at 98 to 110 (VIIIDDVLYTGRT).

It belongs to the purine/pyrimidine phosphoribosyltransferase family. PyrR subfamily. As to quaternary structure, homodimer and homohexamer; in equilibrium.

It carries out the reaction UMP + diphosphate = 5-phospho-alpha-D-ribose 1-diphosphate + uracil. Regulates transcriptional attenuation of the pyrimidine nucleotide (pyr) operon by binding in a uridine-dependent manner to specific sites on pyr mRNA. This disrupts an antiterminator hairpin in the RNA and favors formation of a downstream transcription terminator, leading to a reduced expression of downstream genes. Functionally, also displays a weak uracil phosphoribosyltransferase activity which is not physiologically significant. The protein is Bifunctional protein PyrR of Staphylococcus aureus (strain MSSA476).